A 199-amino-acid polypeptide reads, in one-letter code: TATA-box-binding protein (199 aa).

2 tandem repeats follow at residues 10–86 and 101–177.

Belongs to the TBP family.

Functionally, general factor that plays a role in the activation of archaeal genes transcribed by RNA polymerase. Binds specifically to the TATA box promoter element which lies close to the position of transcription initiation. The protein is TATA-box-binding protein of Pyrobaculum islandicum (strain DSM 4184 / JCM 9189 / GEO3).